We begin with the raw amino-acid sequence, 317 residues long: Retinol dehydrogenase 16 (317 aa).

33–57 (FITGCDSGFGTLLARQLDRRGMRVL) contacts NAD(+). The active-site Proton acceptor is Tyr176. Residues 289–309 (LFYLPLSYLPTFLVDALLYWT) traverse the membrane as a helical segment.

It belongs to the short-chain dehydrogenases/reductases (SDR) family. Homodimer. In terms of processing, not glycosylated.

It localises to the endoplasmic reticulum membrane. Its subcellular location is the microsome membrane. The enzyme catalyses all-trans-retinol--[retinol-binding protein] + NAD(+) = all-trans-retinal--[retinol-binding protein] + NADH + H(+). It carries out the reaction 9-cis-retinol + NAD(+) = 9-cis-retinal + NADH + H(+). The catalysed reaction is 11-cis-retinol + NAD(+) = 11-cis-retinal + NADH + H(+). It catalyses the reaction 13-cis-retinol + NAD(+) = 13-cis-retinal + NADH + H(+). The enzyme catalyses androsterone + NAD(+) = 5alpha-androstan-3,17-dione + NADH + H(+). It carries out the reaction 5alpha-androstane-3alpha,17beta-diol + NAD(+) = 17beta-hydroxy-5alpha-androstan-3-one + NADH + H(+). Its pathway is cofactor metabolism; retinol metabolism. In terms of biological role, oxidoreductase with a preference for NAD. Oxidizes all-trans-retinol, 9-cis-retinol, 11-cis-retinol and 13-cis-retinol to the corresponding aldehydes. Has higher activity towards CRBP-bound retinol than with free retinol. Oxidizes 3-alpha-hydroxysteroids. Oxidizes androstanediol and androsterone to dihydrotestosterone and androstanedione. Can also catalyze the reverse reaction. The polypeptide is Retinol dehydrogenase 16 (Mus musculus (Mouse)).